Reading from the N-terminus, the 108-residue chain is MSGSAKYSDWSQVMALIANAAEQNKHQSLLTMLMTPDEREALMARVNICHELLQGDLSQRQISQLLGVGVATITRGSNELKSHTDDEKAWLMEVLEVSAKSDQGARKE.

Residues 59–82 mediate DNA binding; it reads QRQISQLLGVGVATITRGSNELKS.

Belongs to the TrpR family. In terms of assembly, homodimer.

The protein resides in the cytoplasm. This protein is an aporepressor. When complexed with L-tryptophan it binds the operator region of the trp operon and prevents the initiation of transcription. In Aliivibrio salmonicida (strain LFI1238) (Vibrio salmonicida (strain LFI1238)), this protein is Trp operon repressor homolog.